The following is a 347-amino-acid chain: Dihydroorotate dehydrogenase (quinone) (347 aa).

FMN-binding positions include 61–65 and Thr-85; that span reads AGLDK. Position 65 (Lys-65) interacts with substrate. 110–114 contacts substrate; sequence NRMGF. 2 residues coordinate FMN: Asn-138 and Asn-171. Asn-171 is a binding site for substrate. The Nucleophile role is filled by Ser-174. Asn-176 lines the substrate pocket. The FMN site is built by Lys-216 and Thr-244. A substrate-binding site is contributed by 245 to 246; it reads NT. FMN contacts are provided by residues Gly-267, Gly-296, and 317–318; that span reads YT.

It belongs to the dihydroorotate dehydrogenase family. Type 2 subfamily. Monomer. The cofactor is FMN.

It localises to the cell membrane. The enzyme catalyses (S)-dihydroorotate + a quinone = orotate + a quinol. The protein operates within pyrimidine metabolism; UMP biosynthesis via de novo pathway; orotate from (S)-dihydroorotate (quinone route): step 1/1. Functionally, catalyzes the conversion of dihydroorotate to orotate with quinone as electron acceptor. In Azotobacter vinelandii (strain DJ / ATCC BAA-1303), this protein is Dihydroorotate dehydrogenase (quinone).